A 734-amino-acid polypeptide reads, in one-letter code: MAPNLRIKKACDAMKLLGISETKTRAFLRKLLKTYENNWDFIEEDAYKVLLDAIFDEADAQSTEKNKKEEEKKKKEEEKKSRSVATSRGRRKAPEPLVQDEEDDMDEDEFPLKRRLRSRRGRASSSSSSSSSYNNEDLKTQPEEEDEDDGVTELPPLKRYVRRNGERGLAMTVYNNASPSSSSRLSMEPEEVPPMVLLPAHPMETKVSEASALVILNDEPNIDHKPVISDTGNCSAPMLEMGKSNIHVQEWDWETKDILNDTTAMDVSPSSAIGESSEHKVAAASVELASSTSGEAKICLSFAPATGETTNLHLPSMEDLRRAMEEKCLKSYKIVHPEFSVLGFMKDMCSCYIDLAKNSTSQLLETETVCDMSKAGDESGAVGISMPLVVVPECEISGDGWKAISNMKDITAGEENVEIPWVNEINEKVPSRFRYMPHSFVFQDAPVIFSLSSFSDEQSCSTSCIEDCLASEMSCNCAIGVDNGFAYTLDGLLKEEFLEARISEARDQRKQVLRFCEECPLERAKKVEILEPCKGHLKRGAIKECWFKCGCTKRCGNRVVQRGMHNKLQVFFTPNGKGWGLRTLEKLPKGAFICEYIGEILTIPELYQRSFEDKPTLPVILDAHWGSEERLEGDKALCLDGMFYGNISRFLNHRCLDANLIEIPVQVETPDQHYYHLAFFTTRDIEAMEELAWDYGIDFNDNDSLMKPFDCLCGSRFCRNKKRSTKTMQILNKA.

Positions 61-163 (QSTEKNKKEE…LPPLKRYVRR (103 aa)) are disordered. Basic and acidic residues predominate over residues 62-81 (STEKNKKEEEKKKKEEEKKS). Acidic residues predominate over residues 98–109 (VQDEEDDMDEDE). Residues 113 to 122 (KRRLRSRRGR) are compositionally biased toward basic residues. The span at 123-132 (ASSSSSSSSS) shows a compositional bias: low complexity. 8 residues coordinate Zn(2+): C460, C464, C468, C477, C545, C549, C551, and C555. The region spanning 460–563 (CSTSCIEDCL…RCGNRVVQRG (104 aa)) is the Pre-SET domain. One can recognise an SET domain in the interval 566–696 (NKLQVFFTPN…AMEELAWDYG (131 aa)). Residues 577–579 (KGW) and 652–653 (NH) contribute to the S-adenosyl-L-methionine site. C655 contacts Zn(2+). Y695 contributes to the S-adenosyl-L-methionine binding site. The Post-SET domain occupies 707–723 (KPFDCLCGSRFCRNKKR). Zn(2+)-binding residues include C711, C713, and C718.

It belongs to the class V-like SAM-binding methyltransferase superfamily. Histone-lysine methyltransferase family. As to quaternary structure, interacts with SUVR2 and itself.

It localises to the nucleus. Its subcellular location is the chromosome. Its function is as follows. Probable inactive histone-lysine methyltransferase that acts as regulator of transctiptional gene silencing independently of histone H3K9 methylation. Contributes to transcriptional gene silencing at RNA-directed DNA methylation (RdDM) target loci but also at RdDM-independent target loci. In Arabidopsis thaliana (Mouse-ear cress), this protein is Probable inactive histone-lysine N-methyltransferase SUVR1 (SUVR1).